Here is a 254-residue protein sequence, read N- to C-terminus: Alcohol dehydrogenase 1 (254 aa).

NAD(+) is bound at residue 10-33; it reads FVAGLGGIGFDTSREIVKKGPKNL. S138 contributes to the substrate binding site. Y151 serves as the catalytic Proton acceptor.

It belongs to the short-chain dehydrogenases/reductases (SDR) family. In terms of assembly, homodimer.

The enzyme catalyses a primary alcohol + NAD(+) = an aldehyde + NADH + H(+). The catalysed reaction is a secondary alcohol + NAD(+) = a ketone + NADH + H(+). This is Alcohol dehydrogenase 1 (Adh1) from Drosophila mojavensis (Fruit fly).